The primary structure comprises 682 residues: Nephrocystin-1-like protein (682 aa).

Residues 10–100 (LQDAINRFPQ…ALSPEKEQLS (91 aa)) are a coiled coil. Positions 96–188 (KEQLSFSVSV…PLESKTLNER (93 aa)) are disordered. Residues 128–148 (NDDESEDSDNDSEIIETDVQL) are compositionally biased toward acidic residues. The SH3 domain maps to 215 to 275 (VRGNVFVAID…PKTYLQHVKE (61 aa)).

It belongs to the nephrocystin-1 family. As to expression, expressed in ciliated sensory neurons of the head (amphid neurons) and the tail in hermaphrodites (phasmid neurons) and males (sensory ray neurons).

Functionally, plays a role in the extension of dendrites from phasmid ciliated sensory neurons. May be necessary for initial assembly of the cilium. The polypeptide is Nephrocystin-1-like protein (Caenorhabditis elegans).